Here is a 521-residue protein sequence, read N- to C-terminus: MIKQALISVSDKSGIVDFAKSLSDLGVKILSTGGTAKLLADAGLPVTEVADYTGFPEMLDGRVKTLHPKVHGGILARRDLPEHMAALEKHDIPTIDLLVVNLYPFVQTVSKEECTLEDAIENIDIGGPTMLRSAAKNHRDVTVVVDPADYATVLDEMRANGNTVGYKTNFRLATKVFAHTAQYDGAITNYLTSLTEQLQHRDRNTYPATLNMAFEKVQDLRYGENPHQSAAFYRDIAAPAGALANYRQLQGKELSYNNIADSDAAWECVKTFDAPACVIIKHANPCGVAVGANPHEAYSKAFQTDPTSAFGGIIAFNREVDETAAQAVAKQFVEVLIAPSFSEAAKQLFAAKQNVRLLEIALGEGHNAFDLKRVGGGLLVQSLDAKNVQPHELRVVTKRHPTPKEMDDLLFAWRVAKFVKSNAIVFCANGMTMGVGAGQMSRVDSARIASIKAQNAGLTLSGTAVASDAFFPFRDGLDVVVNAGATCVIQPGGSMRDDEVIAAADEHNIAMVVTGIRHFRH.

The region spanning 1–145 is the MGS-like domain; the sequence is MIKQALISVS…KNHRDVTVVV (145 aa).

The protein belongs to the PurH family.

The enzyme catalyses (6R)-10-formyltetrahydrofolate + 5-amino-1-(5-phospho-beta-D-ribosyl)imidazole-4-carboxamide = 5-formamido-1-(5-phospho-D-ribosyl)imidazole-4-carboxamide + (6S)-5,6,7,8-tetrahydrofolate. It carries out the reaction IMP + H2O = 5-formamido-1-(5-phospho-D-ribosyl)imidazole-4-carboxamide. Its pathway is purine metabolism; IMP biosynthesis via de novo pathway; 5-formamido-1-(5-phospho-D-ribosyl)imidazole-4-carboxamide from 5-amino-1-(5-phospho-D-ribosyl)imidazole-4-carboxamide (10-formyl THF route): step 1/1. It participates in purine metabolism; IMP biosynthesis via de novo pathway; IMP from 5-formamido-1-(5-phospho-D-ribosyl)imidazole-4-carboxamide: step 1/1. The polypeptide is Bifunctional purine biosynthesis protein PurH (Paraburkholderia phymatum (strain DSM 17167 / CIP 108236 / LMG 21445 / STM815) (Burkholderia phymatum)).